Consider the following 276-residue polypeptide: S-adenosylmethionine decarboxylase proenzyme (276 aa).

The active-site Schiff-base intermediate with substrate; via pyruvic acid is the serine 126. Serine 126 is subject to Pyruvic acid (Ser); by autocatalysis. Histidine 131 serves as the catalytic Proton acceptor; for processing activity. Cysteine 154 acts as the Proton donor; for catalytic activity in catalysis.

The protein belongs to the prokaryotic AdoMetDC family. Type 2 subfamily. In terms of assembly, heterooctamer of four alpha and four beta chains arranged as a tetramer of alpha/beta heterodimers. Requires pyruvate as cofactor. Post-translationally, is synthesized initially as an inactive proenzyme. Formation of the active enzyme involves a self-maturation process in which the active site pyruvoyl group is generated from an internal serine residue via an autocatalytic post-translational modification. Two non-identical subunits are generated from the proenzyme in this reaction, and the pyruvate is formed at the N-terminus of the alpha chain, which is derived from the carboxyl end of the proenzyme. The post-translation cleavage follows an unusual pathway, termed non-hydrolytic serinolysis, in which the side chain hydroxyl group of the serine supplies its oxygen atom to form the C-terminus of the beta chain, while the remainder of the serine residue undergoes an oxidative deamination to produce ammonia and the pyruvoyl group blocking the N-terminus of the alpha chain.

It catalyses the reaction S-adenosyl-L-methionine + H(+) = S-adenosyl 3-(methylsulfanyl)propylamine + CO2. The protein operates within amine and polyamine biosynthesis; S-adenosylmethioninamine biosynthesis; S-adenosylmethioninamine from S-adenosyl-L-methionine: step 1/1. Its function is as follows. Catalyzes the decarboxylation of S-adenosylmethionine to S-adenosylmethioninamine (dcAdoMet), the propylamine donor required for the synthesis of the polyamines spermine and spermidine from the diamine putrescine. This Alcanivorax borkumensis (strain ATCC 700651 / DSM 11573 / NCIMB 13689 / SK2) protein is S-adenosylmethionine decarboxylase proenzyme.